Reading from the N-terminus, the 250-residue chain is 2,3-bisphosphoglycerate-dependent phosphoglycerate mutase (250 aa).

Residues 10–17 (RHGESQWN), 23–24 (TG), arginine 62, 89–92 (ERHY), lysine 100, 116–117 (RR), and 185–186 (GN) each bind substrate. The active-site Tele-phosphohistidine intermediate is the histidine 11. Glutamate 89 (proton donor/acceptor) is an active-site residue.

Belongs to the phosphoglycerate mutase family. BPG-dependent PGAM subfamily. As to quaternary structure, homodimer.

It catalyses the reaction (2R)-2-phosphoglycerate = (2R)-3-phosphoglycerate. Its pathway is carbohydrate degradation; glycolysis; pyruvate from D-glyceraldehyde 3-phosphate: step 3/5. Catalyzes the interconversion of 2-phosphoglycerate and 3-phosphoglycerate. In Escherichia coli O139:H28 (strain E24377A / ETEC), this protein is 2,3-bisphosphoglycerate-dependent phosphoglycerate mutase.